Reading from the N-terminus, the 411-residue chain is Lissencephaly-1 homolog (411 aa).

In terms of domain architecture, LisH spans 7–39 (QREELNKAIADYLASNGFMEALESFKKETDMPG). Residues 54–80 (TSVIRLQKKVMDLEGRLAEAEKEYISG) adopt a coiled-coil conformation. Residues 77-89 (YISGTPSREKRSP) show a composition bias toward basic and acidic residues. Residues 77–96 (YISGTPSREKRSPTEWIPRP) are disordered. WD repeat units lie at residues 104-145 (GHRA…RTIK), 146-187 (GHTD…RTMH), 188-227 (GHDH…CVRT), 230-269 (GHRD…CKLE), 272-334 (EHDH…ALFT), 337-376 (GHDN…CCKT), and 379-411 (AHSH…WECR).

Belongs to the WD repeat LIS1/nudF family.

Its subcellular location is the cytoplasm. It is found in the cytoskeleton. The protein localises to the microtubule organizing center. It localises to the centrosome. Functionally, positively regulates the activity of the minus-end directed microtubule motor protein dynein. May enhance dynein-mediated microtubule sliding by targeting dynein to the microtubule plus end. Required for several dynein- and microtubule-dependent processes. This chain is Lissencephaly-1 homolog, found in Ixodes scapularis (Black-legged tick).